The sequence spans 189 residues: Photosystem I assembly protein Ycf4 (189 aa).

The next 2 membrane-spanning stretches (helical) occupy residues 29 to 49 and 69 to 89; these read WATI…SSYL and LVMG…WLVI.

This sequence belongs to the Ycf4 family.

The protein resides in the cellular thylakoid membrane. Seems to be required for the assembly of the photosystem I complex. In Nostoc punctiforme (strain ATCC 29133 / PCC 73102), this protein is Photosystem I assembly protein Ycf4.